A 211-amino-acid chain; its full sequence is Tudor-interacting repair regulator protein (211 aa).

Glycyl lysine isopeptide (Lys-Gly) (interchain with G-Cter in ubiquitin) cross-links involve residues Lys-10 and Lys-151. An interaction with PXN region spans residues 118–205; that stretch reads TLEQLHAVEI…TEKQKKALEK (88 aa).

This sequence belongs to the Nudix hydrolase family. TIRR subfamily. In terms of assembly, homodimer. Interacts with TP53BP1 (via the Tudor-like domain); interaction is abolished following DNA damage and TP53BP1 phosphorylation by ATM. Interacts (via the cytoplasmic part) with SDC4. Interacts with TGFB1I1 and PXN.

The protein resides in the nucleus. In terms of biological role, key regulator of TP53BP1 required to stabilize TP53BP1 and regulate its recruitment to chromatin. In absence of DNA damage, interacts with the tandem Tudor-like domain of TP53BP1, masking the region that binds histone H4 dimethylated at 'Lys-20' (H4K20me2), thereby preventing TP53BP1 recruitment to chromatin and maintaining TP53BP1 localization to the nucleus. Following DNA damage, ATM-induced phosphorylation of TP53BP1 and subsequent recruitment of RIF1 leads to dissociate NUDT16L1/TIRR from TP53BP1, unmasking the tandem Tudor-like domain and allowing recruitment of TP53BP1 to DNA double strand breaks (DSBs). Binds U8 snoRNA. The chain is Tudor-interacting repair regulator protein from Mus musculus (Mouse).